Consider the following 437-residue polypeptide: MKVEEILEKALELVIPDEEEVRKGREAEEELRRRLDELGVEYVFVGSYARNTWLKGSLEIDVFLLFPEEFSKEELRERGLEIGKAVLDSYEIRYAEHPYVHGVVKGVEVDVVPCYKLKEPKNIKSAVDRTPFHHKWLEGRIKGKENEVRLLKGFLKANGIYGAEYKVRGFSGYLCELLIVFYGSFLETVKNARRWTRRTVIDVAKGEVRKGEEFFVVDPVDEKRNVAANLSLDNLARFVHLCREFMEAPSLGFFKPKHPLEIEPERLRKIVEERGTAVFAVKFRKPDIVDDNLYPQLERASRKIFEFLERENFMPLRSAFKASEEFCYLLFECQIKEISRVFRRMGPQFEDERNVKKFLSRNRAFRPFIENGRWWAFEMRKFTTPEEGVRSYASTHWHTLGKNVGESIREYFEIISGEKLFKEPVTAELCEMMGVKD.

ATP contacts are provided by Ser-47 and Arg-50. Residues Ser-47 and Arg-50 each contribute to the CTP site. Mg(2+)-binding residues include Glu-59, Asp-61, and Asp-110. ATP is bound by residues His-133, Lys-152, and Tyr-161. Positions 133, 152, and 161 each coordinate CTP.

It belongs to the tRNA nucleotidyltransferase/poly(A) polymerase family. Archaeal CCA-adding enzyme subfamily. Homodimer. It depends on Mg(2+) as a cofactor.

It catalyses the reaction a tRNA precursor + 2 CTP + ATP = a tRNA with a 3' CCA end + 3 diphosphate. The catalysed reaction is a tRNA with a 3' CCA end + 2 CTP + ATP = a tRNA with a 3' CCACCA end + 3 diphosphate. In terms of biological role, catalyzes the addition and repair of the essential 3'-terminal CCA sequence in tRNAs without using a nucleic acid template. Adds these three nucleotides in the order of C, C, and A to the tRNA nucleotide-73, using CTP and ATP as substrates and producing inorganic pyrophosphate. tRNA 3'-terminal CCA addition is required both for tRNA processing and repair. Also involved in tRNA surveillance by mediating tandem CCA addition to generate a CCACCA at the 3' terminus of unstable tRNAs. While stable tRNAs receive only 3'-terminal CCA, unstable tRNAs are marked with CCACCA and rapidly degraded. The structural flexibility of RNA controls the choice between CCA versus CCACCA addition: following the first CCA addition cycle, nucleotide-binding to the active site triggers a clockwise screw motion, producing torque on the RNA. This ejects stable RNAs, whereas unstable RNAs are refolded while bound to the enzyme and subjected to a second CCA catalytic cycle. The protein is CCA-adding enzyme of Archaeoglobus fulgidus (strain ATCC 49558 / DSM 4304 / JCM 9628 / NBRC 100126 / VC-16).